The primary structure comprises 439 residues: Iron-sulfur cluster assembly factor IBA57 homolog, mitochondrial (439 aa).

The N-terminal 72 residues, 1–72 (MQPATRSIAV…RLISVSGPDA (72 aa)), are a transit peptide targeting the mitochondrion.

This sequence belongs to the GcvT family. CAF17/IBA57 subfamily.

It localises to the mitochondrion matrix. The protein is Iron-sulfur cluster assembly factor IBA57 homolog, mitochondrial (caf-17) of Neurospora crassa (strain ATCC 24698 / 74-OR23-1A / CBS 708.71 / DSM 1257 / FGSC 987).